Reading from the N-terminus, the 322-residue chain is MKSCLLLFLIFSFLLSFSLAEQCGRQAGGALCPNGLCCSEFGWCGDTEAYCKQPGCQSQCGGTPPGPTGDLSGIISRSQFDDMLKHRNDNACPARGFYTYDAFINAAKSFPGFGTTGDTATRKKEIAAFFGQTSHETTGGWATAPDGPYSWGYCFKQEQNPSSNYCSPSAEWPCASGKSYYGRGPMQLSWNYNYGQCGRAIGSDLLNNPDLVSNDPVIAFKAAIWFWMTPQSPKPSCHAVIVGQWQPSDADRAAGRVPGYGVITNIINGGLECGRGQDARVADRIGFYQRYCNILGVNPGGNLDCYNQRSFASVNFFLDAAI.

An N-terminal signal peptide occupies residues M1 to A20. The region spanning E21 to G62 is the Chitin-binding type-1 domain. 7 disulfides stabilise this stretch: C23-C38, C32-C44, C37-C51, C56-C60, C92-C154, C166-C174, and C273-C305. The active-site Proton donor is E136.

The protein belongs to the glycosyl hydrolase 19 family. Chitinase class I subfamily. In terms of tissue distribution, high expression in roots, moderate in floral tissues and low in stems and leaves.

It carries out the reaction Random endo-hydrolysis of N-acetyl-beta-D-glucosaminide (1-&gt;4)-beta-linkages in chitin and chitodextrins.. The protein is Endochitinase CH25 of Brassica napus (Rape).